The chain runs to 276 residues: MAIKKYKPTTNGRRNMTSSDFAEITTSTPEKSLLQPLKNNAGRNNNGRITVRHQGGGHKRQYRVIDFKRNKDNVAAVVKTIEYDPNRSANIALVHYEDGVKAYILAPKGLEVGMRLVSGPEADIKVGNALPLENIPVGTVIHNIEMKPGKGGQLIRSAGTSAQVLGKEGKYVLIRLNSGEVRMILATCRATIGSVGNEQHELINIGKAGRSRWMRKRPTVRGSVMNPNDHPHGGGEGKTPIGRKAPVSPWGQPAIGYKTRNKKAKSDKLIVRRRTK.

2 disordered regions span residues 34-55 (LQPL…RHQG) and 221-276 (RGSV…RRTK). Polar residues predominate over residues 37–48 (LKNNAGRNNNGR).

This sequence belongs to the universal ribosomal protein uL2 family. As to quaternary structure, part of the 50S ribosomal subunit. Forms a bridge to the 30S subunit in the 70S ribosome.

Functionally, one of the primary rRNA binding proteins. Required for association of the 30S and 50S subunits to form the 70S ribosome, for tRNA binding and peptide bond formation. It has been suggested to have peptidyltransferase activity; this is somewhat controversial. Makes several contacts with the 16S rRNA in the 70S ribosome. This is Large ribosomal subunit protein uL2 from Enterococcus faecalis (strain ATCC 700802 / V583).